The following is a 726-amino-acid chain: Dipeptidyl-peptidase 5 (726 aa).

The first 19 residues, 1-19 (MAPAKWLIASLAFASTGLA), serve as a signal peptide directing secretion. Residues Asn-96 and Asn-252 are each glycosylated (N-linked (GlcNAc...) asparagine). The disordered stretch occupies residues 268-292 (VAEPINKRNGPRTPHGIEGASSSPV). A glycan (N-linked (GlcNAc...) asparagine) is linked at Asn-485. Catalysis depends on Ser-558, which acts as the Charge relay system. Asn-605 carries N-linked (GlcNAc...) asparagine glycosylation. Active-site charge relay system residues include Asp-641 and His-673. Asn-699 carries an N-linked (GlcNAc...) asparagine glycan.

The protein belongs to the peptidase S9C family.

The protein resides in the secreted. Its function is as follows. Extracellular dipeptidyl-peptidase which removes N-terminal dipeptides sequentially from polypeptides having unsubstituted N-termini. Contributes to pathogenicity. The polypeptide is Dipeptidyl-peptidase 5 (DPP5) (Arthroderma otae (strain ATCC MYA-4605 / CBS 113480) (Microsporum canis)).